The sequence spans 387 residues: MTVLKMTDLDLQGKRVLIREDLNVPVKDGVVASDARILAALPTIKLALEKGAAVMVCSHLGRPTEGEFSAENSLKPVADYLSKALGRDVPLVADYLDGVAVQAGELVLFENVRFNKGEKKNADELAQKYAALCDVFVMDAFGTAHRAEGSTHGVAKFAKVAAAGPLLAAELDALGKALKAPAKPMAAIVAGSKVSTKLDVLNSLSSVCDQLIVGGGIANTFLAAAGHPVGKSLYEPDLVDTAKAIAAKVSVPLPVDVVVAKEFAETAEATVKAIADVAADDMILDIGPQTAANFAELLKSSKTILWNGPVGVFEFDQFGNGTKVLAKAIADSAAFSIAGGGDTLAAIDKYGVSKEISYISTGGGAFLEFVEGKVLPAVAILEERAKA.

Substrate-binding positions include 21–23, Arg36, 59–62, Arg113, and Arg146; these read DLN and HLGR. ATP contacts are provided by residues Lys197, Glu314, and 340–343; that span reads GGDT.

Belongs to the phosphoglycerate kinase family. Monomer.

It localises to the cytoplasm. The catalysed reaction is (2R)-3-phosphoglycerate + ATP = (2R)-3-phospho-glyceroyl phosphate + ADP. Its pathway is carbohydrate degradation; glycolysis; pyruvate from D-glyceraldehyde 3-phosphate: step 2/5. The protein is Phosphoglycerate kinase of Pseudomonas putida (strain ATCC 700007 / DSM 6899 / JCM 31910 / BCRC 17059 / LMG 24140 / F1).